A 101-amino-acid chain; its full sequence is NADH-quinone oxidoreductase subunit K (101 aa).

3 helical membrane passes run 5-25 (LTHYVVASGILFAIGLAGIIL), 30-50 (IVILMCLEIMLNAANLALVAF), and 61-81 (VLVFFVITVAAAEVAVGLALI).

Belongs to the complex I subunit 4L family. NDH-1 is composed of 14 different subunits. Subunits NuoA, H, J, K, L, M, N constitute the membrane sector of the complex.

The protein resides in the cell inner membrane. It carries out the reaction a quinone + NADH + 5 H(+)(in) = a quinol + NAD(+) + 4 H(+)(out). Its function is as follows. NDH-1 shuttles electrons from NADH, via FMN and iron-sulfur (Fe-S) centers, to quinones in the respiratory chain. The immediate electron acceptor for the enzyme in this species is believed to be ubiquinone. Couples the redox reaction to proton translocation (for every two electrons transferred, four hydrogen ions are translocated across the cytoplasmic membrane), and thus conserves the redox energy in a proton gradient. The polypeptide is NADH-quinone oxidoreductase subunit K (Methylacidiphilum infernorum (isolate V4) (Methylokorus infernorum (strain V4))).